The chain runs to 243 residues: Probable HTH-type transcriptional regulator GfsR (243 aa).

Residues 154 to 179 are disordered; that stretch reads AAVARPDTSGSATGRTGDSSPSLALS. The segment covering 161–178 has biased composition (polar residues); the sequence is TSGSATGRTGDSSPSLAL. Residues 171-236 form the HTH luxR-type domain; that stretch reads DSSPSLALSP…QALLRWLGHP (66 aa). The H-T-H motif DNA-binding region spans 195-214; it reads VREIAVEMRLAEKTVRNYLS.

The protein operates within antibiotic biosynthesis. Its function is as follows. Probable DNA-binding protein that contributes to the control of expression of the biosynthesis operon of the 16-membered macrolide antibiotics FD-891 and FD-892. Might be a member of a two-component regulatory system; the putative sensor kinase gene is unknown. The protein is Probable HTH-type transcriptional regulator GfsR of Streptomyces halstedii.